The chain runs to 263 residues: 5'-nucleotidase SurE (263 aa).

A divalent metal cation is bound by residues aspartate 8, aspartate 9, serine 40, and asparagine 98.

It belongs to the SurE nucleotidase family. It depends on a divalent metal cation as a cofactor.

Its subcellular location is the cytoplasm. It catalyses the reaction a ribonucleoside 5'-phosphate + H2O = a ribonucleoside + phosphate. In terms of biological role, nucleotidase that shows phosphatase activity on nucleoside 5'-monophosphates. The sequence is that of 5'-nucleotidase SurE from Gloeobacter violaceus (strain ATCC 29082 / PCC 7421).